The sequence spans 855 residues: Lon protease (855 aa).

One can recognise a Lon N-terminal domain in the interval 45–288 (IYLLTVKNVV…ETFRFLNIEY (244 aa)). An ATP-binding site is contributed by 439–446 (GPPGVGKT). In terms of domain architecture, Lon proteolytic spans 674-855 (IQVPGVVTGL…NEVIDLSIIK (182 aa)). Residues serine 761 and lysine 804 contribute to the active site.

It belongs to the peptidase S16 family. In terms of assembly, homohexamer. Organized in a ring with a central cavity.

It is found in the cytoplasm. The catalysed reaction is Hydrolysis of proteins in presence of ATP.. Functionally, ATP-dependent serine protease that mediates the selective degradation of mutant and abnormal proteins as well as certain short-lived regulatory proteins. Required for cellular homeostasis and for survival from DNA damage and developmental changes induced by stress. Degrades polypeptides processively to yield small peptide fragments that are 5 to 10 amino acids long. Binds to DNA in a double-stranded, site-specific manner. This chain is Lon protease, found in Karelsulcia muelleri (strain GWSS) (Sulcia muelleri).